A 533-amino-acid polypeptide reads, in one-letter code: Cytochrome P450 monooxygenase ltmK (533 aa).

A helical membrane pass occupies residues 27-47; that stretch reads VHWLQVIVALLVLIVCIFLYW. Residue Asn116 is glycosylated (N-linked (GlcNAc...) asparagine). Cys473 provides a ligand contact to heme. Asn528 carries N-linked (GlcNAc...) asparagine glycosylation.

This sequence belongs to the cytochrome P450 family. Requires heme as cofactor.

Its subcellular location is the membrane. The protein operates within secondary metabolite biosynthesis. Cytochrome P450 monooxygenase; part of the gene clusters that mediates the biosynthesis of lolitrems, indole-diterpene mycotoxins that are potent tremorgens in mammals, and are synthesized by clavicipitaceous fungal endophytes in association with their grass hosts. The geranylgeranyl diphosphate (GGPP) synthase ltmG is proposed to catalyze the first step in lolitrem biosynthesis. LtmG catalyzes a series of iterative condensations of isopentenyl diphosphate (IPP) with dimethylallyl diphosphate (DMAPP), geranyl diphosphate (GPP), and farnesyl diphosphate (FPP), to form GGPP. GGPP then condenses with indole-3-glycerol phosphate to form 3-geranylgeranylindole, an acyclic intermediate, to be incorporated into paxilline. Either ltmG or ltmC could be responsible for this step, as both are putative prenyl transferases. The FAD-dependent monooxygenase ltmM then catalyzes the epoxidation of the two terminal alkenes of the geranylgeranyl moiety, which is subsequently cyclized by ltmB, to paspaline. The cytochrome P450 monooxygenases ltmQ and ltmP can sequentially oxidize paspaline to terpendole E and terpendole F. Alternatively, ltmP converts paspaline to an intermediate which is oxidized by ltmQ to terpendole F. LtmF, ltmK, ltmE and ltmJ appear to be unique to the epichloe endophytes. The prenyltransferase ltmF is involved in the 27-hydroxyl-O-prenylation. The cytochrome P450 monooxygenase ltmK is required for the oxidative acetal ring formation. The multi-functional prenyltransferase ltmE is required for C20- and C21-prenylations of the indole ring of paspalanes and acts together with the cytochrome P450 monooxygenase ltmJ to yield lolitremanes by multiple oxidations and ring closures. The stereoisomer pairs of lolitriol and lolitrem N or lolitrem B and lolitrem F may be attributed to variations in the way in which ring closure can occur under the action of ltmJ. While the major product of this pathway is lolitrem B, the prenyl transferases and cytochrome P450 monooxygenases identified in this pathway have a remarkable versatility in their regio- and stereo-specificities to generate a diverse range of metabolites that are products of a metabolic grid rather than a linear pathway. This chain is Cytochrome P450 monooxygenase ltmK, found in Epichloe festucae var. lolii (Neotyphodium lolii).